We begin with the raw amino-acid sequence, 588 residues long: Myc box-dependent-interacting protein 1 (588 aa).

Ala2 is modified (N-acetylalanine). An interaction with BIN2 region spans residues 2-122 (AEMGSKGVTA…DYHQKLVDQA (121 aa)). Coiled coils occupy residues 15–42 (ASNVQKKLTRAQEKVLQKLGKADETKDE) and 193–274 (HLVA…EKQH). The BAR domain occupies 29 to 276 (VLQKLGKADE…LVSLEKQHGS (248 aa)). Residues 279 to 355 (FTVKAQPSDN…PKHTPSKEMK (77 aa)) are disordered. Phosphoserine occurs at positions 296, 298, and 304. Thr308 bears the Phosphothreonine mark. Residues Ser324 and Ser332 each carry the phosphoserine modification. Residues 379 to 422 (FEAPGPFSEQASLLDLDFEPLPPVASPVKAPTPSGQSIPWDLWE) are clathrin-binding. Positions 448 to 484 (PSQTAEPGPAQPAEASEVVGGAQEPGETAASEATSSS) are disordered. A compositionally biased stretch (low complexity) spans 474-484 (ETAASEATSSS). Positions 515 to 588 (GFMFKVQAQH…FPENFTERVQ (74 aa)) constitute an SH3 domain.

Heterodimer with AMPH. Binds SH3GLB1. Interacts (via SH3 domain) with DNM1. Interacts with SYNJ1. Interacts (via SH3 domain) with DNM2. Interacts with CLTC. Interacts with AP2A2. Interacts with AP2B1. Interacts with MYC (via N-terminal transactivation domain); the interaction requires the integrity of the conserved MYC box regions 1 and 2. Interacts with BIN2. Interacts with SNX4. Interacts (via BAR domain) with BACE1. Binds (via BAR domain) F-actin. Phosphorylated by protein kinase C. Isoform 1 is expressed mainly in the brain. Isoform 2 is widely expressed.

Its subcellular location is the nucleus. It localises to the cytoplasm. The protein localises to the endosome. The protein resides in the cell membrane. It is found in the sarcolemma. Its subcellular location is the T-tubule. In terms of biological role, is a key player in the control of plasma membrane curvature, and membrane shaping and remodeling. Required in muscle cells for the formation of T-tubules, tubular invaginations of the plasma membrane that function in depolarization-contraction coupling. Required in muscle cells for the formation of T-tubules, tubular invaginations of the plasma membrane that function in depolarization-contraction coupling. Is a negative regulator of endocytosis. Is also involved in the regulation of intracellular vesicles sorting, modulation of BACE1 trafficking and the control of amyloid-beta production. In neuronal circuits, endocytosis regulation may influence the internalization of PHF-tau aggregates. May be involved in the regulation of MYC activity and the control cell proliferation. In Mus musculus (Mouse), this protein is Myc box-dependent-interacting protein 1 (Bin1).